Consider the following 208-residue polypeptide: Protein GrpE (208 aa).

The segment covering 1–12 (MTNKDESVEKNT) has biased composition (basic and acidic residues). The disordered stretch occupies residues 1–49 (MTNKDESVEKNTESTVEVTNVKQNIDDSVEQTEESKGHLQDEAIEETSD). The span at 13–23 (ESTVEVTNVKQ) shows a compositional bias: polar residues.

Belongs to the GrpE family. As to quaternary structure, homodimer.

Its subcellular location is the cytoplasm. In terms of biological role, participates actively in the response to hyperosmotic and heat shock by preventing the aggregation of stress-denatured proteins, in association with DnaK and GrpE. It is the nucleotide exchange factor for DnaK and may function as a thermosensor. Unfolded proteins bind initially to DnaJ; upon interaction with the DnaJ-bound protein, DnaK hydrolyzes its bound ATP, resulting in the formation of a stable complex. GrpE releases ADP from DnaK; ATP binding to DnaK triggers the release of the substrate protein, thus completing the reaction cycle. Several rounds of ATP-dependent interactions between DnaJ, DnaK and GrpE are required for fully efficient folding. The sequence is that of Protein GrpE from Staphylococcus aureus (strain bovine RF122 / ET3-1).